The following is a 223-amino-acid chain: MCCSILHHRNPRREHEFPAVVTSPVTENHIFLGGAGERGLTINGTFIKFTCIGVYLEDKADKSLATKWEGKLEELLETLDFYRDIISGPFEKLIRRSKIKELSGPEYSRKVMENCVAHLKSVGTYGDAEVEAIQNLQKLSRMLIFHLVLLKKNRQSPDGILGLSSSKDISIPEKEDAIIENKAASSAVLETMIGEHAVSPDLKRCLAARLPALLNEGTFKIGN.

Substrate contacts are provided by Thr-50, Asn-114, and Thr-191.

It belongs to the chalcone isomerase family.

It catalyses the reaction a chalcone = a flavanone.. Its pathway is secondary metabolite biosynthesis; flavonoid biosynthesis. In terms of biological role, catalyzes the intramolecular cyclization of bicyclic chalcones into tricyclic (S)-flavanones. Responsible for the isomerization of 4,2',4',6'-tetrahydroxychalcone (also termed chalcone) into naringenin. The sequence is that of Chalcone--flavanone isomerase (CHI) from Pisum sativum (Garden pea).